Consider the following 63-residue polypeptide: Cecropin-1 (63 aa).

The first 21 residues, 1 to 21 (MNFNKVFILVAIVIAIFAGQT), serve as a signal peptide directing secretion. A propeptide spanning residues 22–23 (EA) is cleaved from the precursor. Arg62 bears the Arginine amide mark.

Belongs to the cecropin family.

It is found in the secreted. Cecropins have lytic and antibacterial activity against several Gram-positive and Gram-negative bacteria. The protein is Cecropin-1 (CEC1) of Ceratitis capitata (Mediterranean fruit fly).